Here is a 511-residue protein sequence, read N- to C-terminus: Sphingosine-1-phosphate transporter MFSD2B (511 aa).

A run of 9 helical transmembrane segments spans residues 108-128 (MPWMLGCTPFLVVSYFLLWFV), 136-156 (VLWYLAFFSCFQALSTAYHVP), 236-256 (IAAGIIGCLYLLCISVLFLGV), 280-300 (TMQFGPYLNLISSFLLISAAV), 323-343 (NLVLTILIAAVLSIPFWQWFL), 357-377 (LMIPFSIMLVTISSLVVAYVV), 379-399 (VASGLSIAASLLLPWSMLPDV), 415-435 (AIFYSSFVFFTKLSAGIALGI), and 462-482 (LLIGAAPALMIIIGLTILAFY).

It belongs to the major facilitator superfamily.

Its subcellular location is the cell membrane. The catalysed reaction is sphing-4-enine 1-phosphate(in) = sphing-4-enine 1-phosphate(out). The enzyme catalyses sphinganine 1-phosphate(in) = sphinganine 1-phosphate(out). It catalyses the reaction sphinga-4E,14Z-dienine-1-phosphate(in) = sphinga-4E,14Z-dienine-1-phosphate(out). Lipid transporter that specifically mediates export of sphingosine-1-phosphate in red blood cells and platelets. Sphingosine-1-phosphate is a signaling sphingolipid and its export from red blood cells into in the plasma is required for red blood cell morphology. Sphingosine-1-phosphate export from platelets is required for platelet aggregation and thrombus formation. In addition to export, also able to mediate S1P import. This chain is Sphingosine-1-phosphate transporter MFSD2B, found in Xenopus tropicalis (Western clawed frog).